A 403-amino-acid chain; its full sequence is S-adenosylmethionine synthase (403 aa).

His15 is an ATP binding site. Asp17 contributes to the Mg(2+) binding site. Glu43 contributes to the K(+) binding site. Residues Glu56 and Gln99 each contribute to the L-methionine site. A flexible loop region spans residues 99–109; sequence QSPDINQGVDR. ATP is bound by residues 166–168, 232–233, Asp241, 247–248, Ala264, and Lys268; these read DAK, KF, and RK. Residue Asp241 coordinates L-methionine. An L-methionine-binding site is contributed by Lys272.

The protein belongs to the AdoMet synthase family. As to quaternary structure, homotetramer; dimer of dimers. The cofactor is Mg(2+). K(+) is required as a cofactor.

The protein localises to the cytoplasm. The catalysed reaction is L-methionine + ATP + H2O = S-adenosyl-L-methionine + phosphate + diphosphate. It participates in amino-acid biosynthesis; S-adenosyl-L-methionine biosynthesis; S-adenosyl-L-methionine from L-methionine: step 1/1. Functionally, catalyzes the formation of S-adenosylmethionine (AdoMet) from methionine and ATP. The overall synthetic reaction is composed of two sequential steps, AdoMet formation and the subsequent tripolyphosphate hydrolysis which occurs prior to release of AdoMet from the enzyme. This chain is S-adenosylmethionine synthase, found in Xanthomonas campestris pv. campestris (strain ATCC 33913 / DSM 3586 / NCPPB 528 / LMG 568 / P 25).